The chain runs to 386 residues: MPDPYAWLQNSLLTIHRADWYRSVQTIQGRAGASVVLGGKEVINFASNDYLGLAGDERLIAAAVAATQEFGTGSTGSRLLSGHRELHGELEKAIASWKQTEDALVFSSGYLANIGAIAALVGKRDLILSDQYNHSSLKNGAILSGATVREYSHCEVGELKTQLLEQRQNYRRCLILTDSVFSMDGDLCPLPALLDLAEQFSCMLLVDEAHATGVMGKTGAGCVEHFGCTGRQLIQIGTLSKALGSLGGYVAGSHPLIDYLRNRAPSWIYTTGLSPADTAAALAAINIAQQEPQHRMQLWHNVNYLRELLQKIPNLKLLPSASPILCFQLSSPSEALQVGKQLKQAGIFAPAIRPPTVPTSRIRISLMATHKPAHIEKLVAVLADIS.

R22 is a substrate binding site. 109-110 (GY) contacts pyridoxal 5'-phosphate. H134 provides a ligand contact to substrate. Residues S182, 207–210 (DEAH), and 238–241 (TLSK) contribute to the pyridoxal 5'-phosphate site. An N6-(pyridoxal phosphate)lysine modification is found at K241. T356 is a substrate binding site.

The protein belongs to the class-II pyridoxal-phosphate-dependent aminotransferase family. BioF subfamily. Homodimer. Pyridoxal 5'-phosphate serves as cofactor.

It carries out the reaction 6-carboxyhexanoyl-[ACP] + L-alanine + H(+) = (8S)-8-amino-7-oxononanoate + holo-[ACP] + CO2. Its pathway is cofactor biosynthesis; biotin biosynthesis. Catalyzes the decarboxylative condensation of pimeloyl-[acyl-carrier protein] and L-alanine to produce 8-amino-7-oxononanoate (AON), [acyl-carrier protein], and carbon dioxide. The sequence is that of Putative 8-amino-7-oxononanoate synthase (bioF) from Trichormus variabilis (strain ATCC 29413 / PCC 7937) (Anabaena variabilis).